The primary structure comprises 252 residues: Biosynthetic peptidoglycan transglycosylase (252 aa).

The helical transmembrane segment at 23–43 (IGFLLGCIVAGVVAMQVYFFL) threads the bilayer.

This sequence belongs to the glycosyltransferase 51 family.

Its subcellular location is the cell inner membrane. It catalyses the reaction [GlcNAc-(1-&gt;4)-Mur2Ac(oyl-L-Ala-gamma-D-Glu-L-Lys-D-Ala-D-Ala)](n)-di-trans,octa-cis-undecaprenyl diphosphate + beta-D-GlcNAc-(1-&gt;4)-Mur2Ac(oyl-L-Ala-gamma-D-Glu-L-Lys-D-Ala-D-Ala)-di-trans,octa-cis-undecaprenyl diphosphate = [GlcNAc-(1-&gt;4)-Mur2Ac(oyl-L-Ala-gamma-D-Glu-L-Lys-D-Ala-D-Ala)](n+1)-di-trans,octa-cis-undecaprenyl diphosphate + di-trans,octa-cis-undecaprenyl diphosphate + H(+). Its pathway is cell wall biogenesis; peptidoglycan biosynthesis. In terms of biological role, peptidoglycan polymerase that catalyzes glycan chain elongation from lipid-linked precursors. The sequence is that of Biosynthetic peptidoglycan transglycosylase from Cupriavidus pinatubonensis (strain JMP 134 / LMG 1197) (Cupriavidus necator (strain JMP 134)).